Reading from the N-terminus, the 361-residue chain is MGSIPPRTLLLLLAGALTLKDTQAGSHSMRYFYTSVSRPGLGEPRFIIVGYVDDTQFVRFDSDAASPRMEQRAPWMGQVEPEYWDQQTQIAKDTAQTFRVNLNTALRYYNQSAAGSHTFQTMFGCEVWADGRFFHGYRQYAYDGADYIALNEDLRSWTAADTAAQNTQRKWEAAGEAERHRAYLERECVEWLRRYLEMGKETLQRADPPKAHVTHHPASDREATLRCWALGFYPAEISLTWQRDGEDQTQDTELVETRPGGDGTFQKWAAVVVPSGEEQRYTCRVQHEGLPEPLTLTWEPPAQPTALIVGIVAGVLGVLLILGAVVAVVRRKKHSSDGKGGRYTPAAGGHRDQGSDDSLMP.

The signal sequence occupies residues 1–24 (MGSIPPRTLLLLLAGALTLKDTQA). The segment at 25-114 (GSHSMRYFYT…ALRYYNQSAA (90 aa)) is alpha-1. Over 25–308 (GSHSMRYFYT…EPPAQPTALI (284 aa)) the chain is Extracellular. N-linked (GlcNAc...) asparagine glycosylation occurs at Asn110. An alpha-2 region spans residues 115–206 (GSHTFQTMFG…EMGKETLQRA (92 aa)). Disulfide bonds link Cys125–Cys188 and Cys227–Cys283. The segment at 207–298 (DPPKAHVTHH…GLPEPLTLTW (92 aa)) is alpha-3. The Ig-like C1-type domain occupies 209 to 297 (PKAHVTHHPA…EGLPEPLTLT (89 aa)). Residues 299–308 (EPPAQPTALI) are connecting peptide. A helical membrane pass occupies residues 309–329 (VGIVAGVLGVLLILGAVVAVV). Residues 330-361 (RRKKHSSDGKGGRYTPAAGGHRDQGSDDSLMP) lie on the Cytoplasmic side of the membrane. The tract at residues 335–361 (SSDGKGGRYTPAAGGHRDQGSDDSLMP) is disordered. Phosphoserine is present on residues Ser355 and Ser358.

Belongs to the MHC class I family. As to quaternary structure, heterodimer of an alpha chain and a beta chain (beta-2-microglobulin).

Its subcellular location is the membrane. Involved in the presentation of foreign antigens to the immune system. The polypeptide is RLA class I histocompatibility antigen, alpha chain 19-1 (Oryctolagus cuniculus (Rabbit)).